We begin with the raw amino-acid sequence, 146 residues long: MTQPIHILNGPNLNLLGTREPDVYGTLSLKEIEQACARHARDLGYEILFRQSNHEGELIDWLHDANVNACAVVFNPAAFTHTSVALHDAVRAIEPPVIEVHLSQTAAREAFRHHSYIALAARGSITGLGLQSYLLGINAAITSLGN.

The Proton acceptor role is filled by tyrosine 24. Substrate-binding residues include asparagine 75, histidine 81, and aspartate 88. The Proton donor role is filled by histidine 101. Substrate-binding positions include 102–103 (LS) and arginine 112.

Belongs to the type-II 3-dehydroquinase family. As to quaternary structure, homododecamer.

The enzyme catalyses 3-dehydroquinate = 3-dehydroshikimate + H2O. It functions in the pathway metabolic intermediate biosynthesis; chorismate biosynthesis; chorismate from D-erythrose 4-phosphate and phosphoenolpyruvate: step 3/7. Its function is as follows. Catalyzes a trans-dehydration via an enolate intermediate. This is 3-dehydroquinate dehydratase from Maricaulis maris (strain MCS10) (Caulobacter maris).